Consider the following 396-residue polypeptide: S-adenosylmethionine synthase (396 aa).

H16 is a binding site for ATP. Residue D18 participates in Mg(2+) binding. E44 is a binding site for K(+). 2 residues coordinate L-methionine: E57 and Q100. The tract at residues 100 to 110 (QSPDIAQGVDR) is flexible loop. ATP is bound by residues 167 to 169 (DAK), 233 to 234 (RF), D242, 248 to 249 (RK), A265, and K269. D242 contributes to the L-methionine binding site. K273 contributes to the L-methionine binding site.

This sequence belongs to the AdoMet synthase family. In terms of assembly, homotetramer; dimer of dimers. Requires Mg(2+) as cofactor. K(+) serves as cofactor.

It localises to the cytoplasm. It catalyses the reaction L-methionine + ATP + H2O = S-adenosyl-L-methionine + phosphate + diphosphate. The protein operates within amino-acid biosynthesis; S-adenosyl-L-methionine biosynthesis; S-adenosyl-L-methionine from L-methionine: step 1/1. Functionally, catalyzes the formation of S-adenosylmethionine (AdoMet) from methionine and ATP. The overall synthetic reaction is composed of two sequential steps, AdoMet formation and the subsequent tripolyphosphate hydrolysis which occurs prior to release of AdoMet from the enzyme. This Paraburkholderia xenovorans (strain LB400) protein is S-adenosylmethionine synthase.